The primary structure comprises 368 residues: Phosphotransferase IIC component GlvC (368 aa).

The Periplasmic segment spans residues 1 to 11; that stretch reads MLSQIQRFGGA. The 368-residue stretch at 1 to 368 folds into the PTS EIIC type-1 domain; the sequence is MLSQIQRFGG…VGNMGGGLID (368 aa). Residues 12–32 form a helical membrane-spanning segment; the sequence is MFTPVLLFPFAGIVVGLAILL. The Cytoplasmic portion of the chain corresponds to 33-59; the sequence is QNPMFVGESLTDPNSLFAQIVHIIEEG. The helical transmembrane segment at 60–80 threads the bilayer; it reads GWTVFRNMPLIFAVGLPIGLA. The Periplasmic segment spans residues 81 to 86; sequence KQAQGR. Residues 87–107 form a helical membrane-spanning segment; the sequence is ACLAVMVSFLTWNYFINAMGM. Over 108–129 the chain is Cytoplasmic; sequence TWGSYFGVDFTQDAVAGSGLTM. The chain crosses the membrane as a helical span at residues 130–150; the sequence is MAGIKTLDTSIIGAIIISGIV. The Periplasmic segment spans residues 151-173; that stretch reads TALHNRLFDKKLPVFLGIFQGTS. Residues 174–194 form a helical membrane-spanning segment; it reads YVVIIAFLVMIPCAWLTLLGW. Residues 195-198 lie on the Cytoplasmic side of the membrane; it reads PKVQ. Residues 199-221 traverse the membrane as a helical segment; it reads MGIESLQAFLRSAGALGVWVYTF. The Periplasmic portion of the chain corresponds to 222–224; that stretch reads LER. A helical transmembrane segment spans residues 225–245; it reads ILIPTGLHHFIYGQFIFGPAA. Over 246–276 the chain is Cytoplasmic; sequence VEGGIQMYWAQHLQEFSLSAEPLKSLFPEGG. Residues 277–297 traverse the membrane as a helical segment; that stretch reads FALHGNSKIFGAVGISLAMYF. Topologically, residues 298-306 are periplasmic; the sequence is TAAPENRVK. Residues 307–327 traverse the membrane as a helical segment; it reads VAGLLIPATLTAMLVGITEPL. Residue E328 is a topological domain, cytoplasmic. Residues 329–349 form a helical membrane-spanning segment; the sequence is FTFLFISPLLFAVHAVLAASM. Topologically, residues 350 to 368 are periplasmic; it reads STVMYLFGVVGNMGGGLID.

The protein localises to the cell inner membrane. In terms of biological role, the phosphoenolpyruvate-dependent sugar phosphotransferase system (PTS), a major carbohydrate active -transport system, catalyzes the phosphorylation of incoming sugar substrates concomitant with their translocation across the cell membrane. This operon may be cryptic in wild-type K12 strains. The protein is Phosphotransferase IIC component GlvC of Escherichia coli (strain K12).